Reading from the N-terminus, the 337-residue chain is tRNA-dihydrouridine synthase B (337 aa).

Residues 19–21 (PMA) and glutamine 73 contribute to the FMN site. The active-site Proton donor is the cysteine 103. Residues lysine 142, 203–205 (NGD), and 227–228 (GR) each bind FMN.

The protein belongs to the Dus family. DusB subfamily. Requires FMN as cofactor.

It carries out the reaction a 5,6-dihydrouridine in tRNA + NAD(+) = a uridine in tRNA + NADH + H(+). The catalysed reaction is a 5,6-dihydrouridine in tRNA + NADP(+) = a uridine in tRNA + NADPH + H(+). In terms of biological role, catalyzes the synthesis of 5,6-dihydrouridine (D), a modified base found in the D-loop of most tRNAs, via the reduction of the C5-C6 double bond in target uridines. This is tRNA-dihydrouridine synthase B from Pseudomonas putida (strain ATCC 47054 / DSM 6125 / CFBP 8728 / NCIMB 11950 / KT2440).